We begin with the raw amino-acid sequence, 208 residues long: Holliday junction branch migration complex subunit RuvA (208 aa).

The domain I stretch occupies residues 1 to 64; sequence MIGKLKGIVD…EDMIRLYGFR (64 aa). Positions 65-143 are domain II; the sequence is SDAEREWFRL…AFAPVDPALV (79 aa). The tract at residues 144–152 is flexible linker; sequence ALTGAVEDR. A domain III region spans residues 153–208; it reads TAPQPVADAISALVNLGYPQVQASAAIAAALKGLGDGAETVEAKTLIRLGLRELAR.

Belongs to the RuvA family. As to quaternary structure, homotetramer. Forms an RuvA(8)-RuvB(12)-Holliday junction (HJ) complex. HJ DNA is sandwiched between 2 RuvA tetramers; dsDNA enters through RuvA and exits via RuvB. An RuvB hexamer assembles on each DNA strand where it exits the tetramer. Each RuvB hexamer is contacted by two RuvA subunits (via domain III) on 2 adjacent RuvB subunits; this complex drives branch migration. In the full resolvosome a probable DNA-RuvA(4)-RuvB(12)-RuvC(2) complex forms which resolves the HJ.

It localises to the cytoplasm. Its function is as follows. The RuvA-RuvB-RuvC complex processes Holliday junction (HJ) DNA during genetic recombination and DNA repair, while the RuvA-RuvB complex plays an important role in the rescue of blocked DNA replication forks via replication fork reversal (RFR). RuvA specifically binds to HJ cruciform DNA, conferring on it an open structure. The RuvB hexamer acts as an ATP-dependent pump, pulling dsDNA into and through the RuvAB complex. HJ branch migration allows RuvC to scan DNA until it finds its consensus sequence, where it cleaves and resolves the cruciform DNA. The polypeptide is Holliday junction branch migration complex subunit RuvA (Methylorubrum populi (strain ATCC BAA-705 / NCIMB 13946 / BJ001) (Methylobacterium populi)).